The following is a 167-amino-acid chain: MLPMITGFMNYGQQTLRAARYIGQGFMITLSHTNRLPVTIQYPYEKLITSERFRGRIHFEFDKCIACEVCVRVCPIDLPVVDWKLETNIRKKRLLNYSIDFGICIFCGNCVEYCPTNCLSMTEEYEFATYDRHELNYNQIALGRLPMSVIDDYTIRTIWNSPQTKNG.

2 consecutive 4Fe-4S ferredoxin-type domains span residues 55–84 (GRIHFEFDKCIACEVCVRVCPIDLPVVDWK) and 95–124 (LNYSIDFGICIFCGNCVEYCPTNCLSMTEE). Residues Cys64, Cys67, Cys70, Cys74, Cys104, Cys107, Cys110, and Cys114 each coordinate [4Fe-4S] cluster.

The protein belongs to the complex I 23 kDa subunit family. As to quaternary structure, NDH is composed of at least 16 different subunits, 5 of which are encoded in the nucleus. The cofactor is [4Fe-4S] cluster.

The protein resides in the plastid. The protein localises to the chloroplast thylakoid membrane. It catalyses the reaction a plastoquinone + NADH + (n+1) H(+)(in) = a plastoquinol + NAD(+) + n H(+)(out). The enzyme catalyses a plastoquinone + NADPH + (n+1) H(+)(in) = a plastoquinol + NADP(+) + n H(+)(out). Its function is as follows. NDH shuttles electrons from NAD(P)H:plastoquinone, via FMN and iron-sulfur (Fe-S) centers, to quinones in the photosynthetic chain and possibly in a chloroplast respiratory chain. The immediate electron acceptor for the enzyme in this species is believed to be plastoquinone. Couples the redox reaction to proton translocation, and thus conserves the redox energy in a proton gradient. The protein is NAD(P)H-quinone oxidoreductase subunit I, chloroplastic of Arabis hirsuta (Hairy rock-cress).